Consider the following 199-residue polypeptide: GTP cyclohydrolase-2 (199 aa).

49-53 provides a ligand contact to GTP; sequence RIHSE. C54, C65, and C67 together coordinate Zn(2+). Residues Q70, 92–94, and T114 contribute to the GTP site; that span reads EGR. D126 (proton acceptor) is an active-site residue. The active-site Nucleophile is the R128. T149 and K154 together coordinate GTP.

This sequence belongs to the GTP cyclohydrolase II family. In terms of assembly, homodimer. Zn(2+) serves as cofactor.

It carries out the reaction GTP + 4 H2O = 2,5-diamino-6-hydroxy-4-(5-phosphoribosylamino)-pyrimidine + formate + 2 phosphate + 3 H(+). Its pathway is cofactor biosynthesis; riboflavin biosynthesis; 5-amino-6-(D-ribitylamino)uracil from GTP: step 1/4. Its function is as follows. Catalyzes the conversion of GTP to 2,5-diamino-6-ribosylamino-4(3H)-pyrimidinone 5'-phosphate (DARP), formate and pyrophosphate. This Blochmanniella pennsylvanica (strain BPEN) protein is GTP cyclohydrolase-2.